Consider the following 373-residue polypeptide: Transaldolase (373 aa).

The Schiff-base intermediate with substrate role is filled by K143.

The protein belongs to the transaldolase family. Type 2 subfamily.

It is found in the cytoplasm. It carries out the reaction D-sedoheptulose 7-phosphate + D-glyceraldehyde 3-phosphate = D-erythrose 4-phosphate + beta-D-fructose 6-phosphate. It participates in carbohydrate degradation; pentose phosphate pathway; D-glyceraldehyde 3-phosphate and beta-D-fructose 6-phosphate from D-ribose 5-phosphate and D-xylulose 5-phosphate (non-oxidative stage): step 2/3. In terms of biological role, transaldolase is important for the balance of metabolites in the pentose-phosphate pathway. The sequence is that of Transaldolase (tal) from Mycobacterium bovis (strain ATCC BAA-935 / AF2122/97).